Consider the following 1447-residue polypeptide: Baculoviral IAP repeat-containing protein 1b (1447 aa).

BIR repeat units follow at residues 60–127 (EAKR…CEFL), 159–227 (EEAR…CEFL), and 278–345 (EELR…CVFL). The Zn(2+) site is built by Cys-315, Cys-318, His-335, and Cys-342. Positions 508–802 (SVMCVEGEAG…EFLAAVRLTE (295 aa)) constitute an NACHT domain. Residue Lys-520 participates in ATP binding.

In terms of assembly, component of the NLRC4 inflammasome, at least composed of NLRC4, caspase-1 (CASP1) and some NAIP protein. Interacts with S.typhimurium (Salmonella) PrgJ and B.thailandensis BsaK.

In terms of biological role, sensor component of the NLRC4 inflammasome that specifically recognizes and binds type III secretion system (T3SS) rod proteins such as S.typhimurium (Salmonella) PrgJ and B.thailandensis BsaK from pathogenic bacteria. Association of pathogenic bacteria proteins drives in turn drive assembly and activation of the NLRC4 inflammasome, promoting caspase-1 activation, cytokine production and macrophage pyroptosis. The NLRC4 inflammasome is activated as part of the innate immune response to a range of intracellular bacteria. The NLRC4 inflammasome senses Gram-negative bacteria such as L.pneumophila and P.aeruginosa, enteric pathogens S.typhimurium (Salmonella) and S.flexneri. Prevents motor-neuron apoptosis induced by a variety of signals. The chain is Baculoviral IAP repeat-containing protein 1b (Naip2) from Mus musculus (Mouse).